Consider the following 348-residue polypeptide: Phosphoribosylformylglycinamidine cyclo-ligase (348 aa).

Belongs to the AIR synthase family.

The protein resides in the cytoplasm. The catalysed reaction is 2-formamido-N(1)-(5-O-phospho-beta-D-ribosyl)acetamidine + ATP = 5-amino-1-(5-phospho-beta-D-ribosyl)imidazole + ADP + phosphate + H(+). The protein operates within purine metabolism; IMP biosynthesis via de novo pathway; 5-amino-1-(5-phospho-D-ribosyl)imidazole from N(2)-formyl-N(1)-(5-phospho-D-ribosyl)glycinamide: step 2/2. In Geotalea daltonii (strain DSM 22248 / JCM 15807 / FRC-32) (Geobacter daltonii), this protein is Phosphoribosylformylglycinamidine cyclo-ligase.